Consider the following 325-residue polypeptide: Glycine--tRNA ligase alpha subunit (325 aa).

Belongs to the class-II aminoacyl-tRNA synthetase family. As to quaternary structure, tetramer of two alpha and two beta subunits.

It localises to the cytoplasm. The enzyme catalyses tRNA(Gly) + glycine + ATP = glycyl-tRNA(Gly) + AMP + diphosphate. This is Glycine--tRNA ligase alpha subunit from Ralstonia nicotianae (strain ATCC BAA-1114 / GMI1000) (Ralstonia solanacearum).